Reading from the N-terminus, the 166-residue chain is Small ribosomal subunit protein uS5 (166 aa).

In terms of domain architecture, S5 DRBM spans 11-74; sequence LQEKLIAVNR…EKARRNMINV (64 aa).

The protein belongs to the universal ribosomal protein uS5 family. As to quaternary structure, part of the 30S ribosomal subunit. Contacts proteins S4 and S8.

Functionally, with S4 and S12 plays an important role in translational accuracy. Its function is as follows. Located at the back of the 30S subunit body where it stabilizes the conformation of the head with respect to the body. This chain is Small ribosomal subunit protein uS5, found in Actinobacillus succinogenes (strain ATCC 55618 / DSM 22257 / CCUG 43843 / 130Z).